We begin with the raw amino-acid sequence, 60 residues long: Cytotoxin 2 (60 aa).

Intrachain disulfides connect Cys-3–Cys-21, Cys-14–Cys-38, Cys-42–Cys-53, and Cys-54–Cys-59.

The protein belongs to the three-finger toxin family. Short-chain subfamily. Type IA cytotoxin sub-subfamily. Monomer in solution; Homodimer and oligomer in the presence of negatively charged lipids forming a pore with a size ranging between 20 and 30 Angstroms. As to expression, expressed by the venom gland.

Its subcellular location is the secreted. The protein localises to the target cell membrane. Its function is as follows. Shows cytolytic activity on many different cells by forming pore in lipid membranes. In vivo, increases heart rate or kills the animal by cardiac arrest. In addition, it binds to heparin with high affinity, interacts with Kv channel-interacting protein 1 (KCNIP1) in a calcium-independent manner, and binds to integrin alpha-V/beta-3 (ITGAV/ITGB3) with moderate affinity. This is Cytotoxin 2 from Naja mossambica (Mozambique spitting cobra).